The sequence spans 352 residues: MDSLNEVCYEQIKGTFYKGLFGDFPLIVDKKTGCFNATKLCVLGGKRFVDWNKTLRSKKLIQYYETRCDIKTESLLYEIKGDNNDEITKQITGTYLPKEFILDIASWISVEFYDKCNNIIINYFVNEYKTMDKKTLQSKINEVEEKMQKLLNEKEEELQEKNDKIDELILFSKRMEEDRKKDREMMIKQEKMLRELGIHLEDVSSQNNELIEKVDEQVEQNAVLNFKIDNIQNKLEIAVEDRAPQPKQNLKRERFILLKRNDDYYPYYTIRAQDINARSALKRQKNLYNEVSVLLDLTCHPNSKTLYVRVKDELKQKGVVFNLCKVSISNSKINEEELIKAMETINDEKRDV.

A KilA-N domain is found at 15–123 (TFYKGLFGDF…DKCNNIIINY (109 aa)). A coiled-coil region spans residues 129-236 (KTMDKKTLQS…KIDNIQNKLE (108 aa)).

The protein belongs to the IIV-6 006L/238R/313L/468L family.

In Acheta domesticus (House cricket), this protein is Putative KilA-N domain-containing protein 006L.